The sequence spans 358 residues: MDRVLVAMSGGVDSSVTAALLKEQGYEVIGGTMEIFPDYEQPPLDEGGCCSLSSIEDARRVAHHIGIRHYTFNLKKVFEEEVINNFVNEYKNARTPNPCVVCNNEIKFRSLLKKALELDADYIATGHYAIVEHNVNGKHLLKKAKDVDKDQTYMLYGLTQFQLSHTLMPLGNYTKQEVRQMAKDFGFRIHNKPESQEICFVPDNNYTRFLDENYPGLGKPGPVMDTDGNILGKHKGLHHYTIGQRRGLGISLGYPVYVVKLDREKNAVIIGPEEEVYSKSLIANKVNWISIDKLTEPIKVTARIRYNSPESHAKIYPVNDNEVKVVFDKKQRAVTPGQSVVFYDGKVVVGGGIIKENF.

ATP-binding positions include 7–14 and M33; that span reads AMSGGVDS. C102 acts as the Nucleophile in catalysis. C102 and C199 are oxidised to a cystine. G126 serves as a coordination point for ATP. Residues 149 to 151 form an interaction with tRNA region; the sequence is KDQ. The active-site Cysteine persulfide intermediate is C199. The interval 305–306 is interaction with tRNA; the sequence is RY.

It belongs to the MnmA/TRMU family.

It is found in the cytoplasm. It carries out the reaction S-sulfanyl-L-cysteinyl-[protein] + uridine(34) in tRNA + AH2 + ATP = 2-thiouridine(34) in tRNA + L-cysteinyl-[protein] + A + AMP + diphosphate + H(+). Catalyzes the 2-thiolation of uridine at the wobble position (U34) of tRNA, leading to the formation of s(2)U34. The chain is tRNA-specific 2-thiouridylase MnmA from Halothermothrix orenii (strain H 168 / OCM 544 / DSM 9562).